The primary structure comprises 351 residues: Nicotinate-nucleotide--dimethylbenzimidazole phosphoribosyltransferase (351 aa).

The Proton acceptor role is filled by Glu-317.

The protein belongs to the CobT family.

The enzyme catalyses 5,6-dimethylbenzimidazole + nicotinate beta-D-ribonucleotide = alpha-ribazole 5'-phosphate + nicotinate + H(+). The protein operates within nucleoside biosynthesis; alpha-ribazole biosynthesis; alpha-ribazole from 5,6-dimethylbenzimidazole: step 1/2. Catalyzes the synthesis of alpha-ribazole-5'-phosphate from nicotinate mononucleotide (NAMN) and 5,6-dimethylbenzimidazole (DMB). The sequence is that of Nicotinate-nucleotide--dimethylbenzimidazole phosphoribosyltransferase from Pseudomonas putida (strain ATCC 700007 / DSM 6899 / JCM 31910 / BCRC 17059 / LMG 24140 / F1).